A 199-amino-acid chain; its full sequence is NAD(P)H dehydrogenase (quinone) (199 aa).

Residues 4–190 (ILVLYYSTYG…DGARFQGRHV (187 aa)) form the Flavodoxin-like domain. FMN-binding positions include 10 to 15 (STYGHI) and 78 to 80 (TRF). Residue Tyr-12 participates in NAD(+) binding. Trp-98 serves as a coordination point for substrate. FMN is bound by residues 113-119 (STATQHG) and His-134.

Belongs to the WrbA family. It depends on FMN as a cofactor.

The enzyme catalyses a quinone + NADH + H(+) = a quinol + NAD(+). The catalysed reaction is a quinone + NADPH + H(+) = a quinol + NADP(+). This is NAD(P)H dehydrogenase (quinone) from Rhizorhabdus wittichii (strain DSM 6014 / CCUG 31198 / JCM 15750 / NBRC 105917 / EY 4224 / RW1) (Sphingomonas wittichii).